We begin with the raw amino-acid sequence, 384 residues long: Toluene efflux pump periplasmic linker protein TtgA (384 aa).

An N-terminal signal peptide occupies residues methionine 1–glycine 22. Cysteine 23 carries N-palmitoyl cysteine lipidation. Cysteine 23 carries S-diacylglycerol cysteine lipidation. A coiled-coil region spans residues leucine 115 to arginine 155. Positions alanine 362 to glutamate 384 are disordered. Positions proline 368–lysine 378 are enriched in low complexity.

The protein belongs to the membrane fusion protein (MFP) (TC 8.A.1) family.

Its subcellular location is the cell inner membrane. In terms of biological role, the periplasmic linker protein component of a constitutive organic solvent efflux system. Involved in export of toluene, styrene, m-xylene, propylbenzene and ethylbenzene. Also exports AMP and the antibiotics carbenicillin, nalidixic acid, chloramphenicol and tetracycline. In Pseudomonas putida (strain DOT-T1E), this protein is Toluene efflux pump periplasmic linker protein TtgA (ttgA).